Reading from the N-terminus, the 532-residue chain is MNLPDYSPNNSSLQWERFSELLWHNEELGLWVDISRMNVNEHELKELKPIFQKAFEAMNSLEKGSMANIDEERMVGHYWLRNPDLAPSRDISKLIANQISQIEQFTTSILSGDIRSDAGELFTDVLWIGIGGSGLGPLLLIESLQELNKGLKFHFLDNVDPIGIDKKLELLQSKLSTTLFVVVSKSGGTPEPQIAMDQARHVVETNGKNWPTRSVAITMCNSLLDNKAKQENWLKTFDLPDWVGGRTSITGAVGLLPLGLIDSDLKSFLLGASKMDELTRNNELLDNPAALMAMAWYSSGSAKGLKDMVVLPYRDSLEVFSRYLQQLVMESLGKKNDREGNIVFQGLSVYGNKGSTDQHAYVQQLRDGINNFFVTFIEVLTNNESPCLNNKLPGDYLSGFMQGTRLALSDSNRQSLTITLKTFDPLSLGALIALFERTVGLYAELININAYHQPGVEAGKKAAADILNLQLQIEDILSDYSNYSIEQISTRLSSSNSESIYFILRNLVFNNKYSAKGSWKNPSSLIFKREKL.

Residue Glu-330 is the Proton donor of the active site. Residues His-359 and Lys-460 contribute to the active site.

This sequence belongs to the GPI family.

The protein localises to the cytoplasm. The enzyme catalyses alpha-D-glucose 6-phosphate = beta-D-fructose 6-phosphate. Its pathway is carbohydrate biosynthesis; gluconeogenesis. It functions in the pathway carbohydrate degradation; glycolysis; D-glyceraldehyde 3-phosphate and glycerone phosphate from D-glucose: step 2/4. Its function is as follows. Catalyzes the reversible isomerization of glucose-6-phosphate to fructose-6-phosphate. The chain is Glucose-6-phosphate isomerase from Prochlorococcus marinus (strain MIT 9211).